The primary structure comprises 88 residues: Small ribosomal subunit protein bS16 (88 aa).

This sequence belongs to the bacterial ribosomal protein bS16 family.

The protein is Small ribosomal subunit protein bS16 of Desulfitobacterium hafniense (strain DSM 10664 / DCB-2).